Here is a 274-residue protein sequence, read N- to C-terminus: MSASSIARTVYIVSDSTGITAETFSQSVLSQFDQVDFKPIRLPFIDTLQKAEETAERINKNAADTGVPPIVFSTLVNPEILARVRQANGVFLDLFGTFVSHIEQALGLKSSPSIGRSHMQADSEKYRNRIDAINFSLAHDDGQFVNQLDQADVILVGVSRCGKTPTSLYLAMQYAIKAANFPLTPDDFERSSLPKTIAPYRDKLFGLSIQPERLSEVRNERRPNSRYATIEQCRYEVAEAERMMRRAGISWLSTTTKSIEEIATTVLQEVGLGR.

157–164 (GVSRCGKT) is an ADP binding site.

This sequence belongs to the pyruvate, phosphate/water dikinase regulatory protein family. PSRP subfamily.

It catalyses the reaction [pyruvate, water dikinase] + ADP = [pyruvate, water dikinase]-phosphate + AMP + H(+). The catalysed reaction is [pyruvate, water dikinase]-phosphate + phosphate + H(+) = [pyruvate, water dikinase] + diphosphate. Functionally, bifunctional serine/threonine kinase and phosphorylase involved in the regulation of the phosphoenolpyruvate synthase (PEPS) by catalyzing its phosphorylation/dephosphorylation. The chain is Putative phosphoenolpyruvate synthase regulatory protein from Bordetella avium (strain 197N).